A 44-amino-acid chain; its full sequence is Photosystem I reaction center subunit IX (44 aa).

The helical transmembrane segment at 7-27 (YLSTAPVLAISWLIFVAGLLI) threads the bilayer.

Belongs to the PsaJ family.

It localises to the plastid. It is found in the chloroplast thylakoid membrane. Functionally, may help in the organization of the PsaE and PsaF subunits. The protein is Photosystem I reaction center subunit IX of Larix decidua (European larch).